The chain runs to 44 residues: Cuticle protein CP459 (44 aa).

Repeat copies occupy residues 3-20 (LLKGPSGVLFEDGQKRLL) and 27-44 (VLLTESGAVLSNGENVQF).

As to expression, calcified shell.

This chain is Cuticle protein CP459, found in Cancer pagurus (Rock crab).